A 345-amino-acid polypeptide reads, in one-letter code: DNA-directed RNA polymerase subunit alpha (345 aa).

Positions 1-241 (MLRDTHLALQ…DQLGMFINFE (241 aa)) are alpha N-terminal domain (alpha-NTD). Positions 257-345 (FNPNLLRKVD…ELVKRSDNPF (89 aa)) are alpha C-terminal domain (alpha-CTD).

Belongs to the RNA polymerase alpha chain family. In terms of assembly, homodimer. The RNAP catalytic core consists of 2 alpha, 1 beta, 1 beta' and 1 omega subunit. When a sigma factor is associated with the core the holoenzyme is formed, which can initiate transcription.

It carries out the reaction RNA(n) + a ribonucleoside 5'-triphosphate = RNA(n+1) + diphosphate. DNA-dependent RNA polymerase catalyzes the transcription of DNA into RNA using the four ribonucleoside triphosphates as substrates. This is DNA-directed RNA polymerase subunit alpha from Acidiphilium cryptum (strain JF-5).